Consider the following 668-residue polypeptide: BTB/POZ domain-containing protein At5g66560 (668 aa).

Residues 21–133 (SDIEIEVDDM…CYGVKMDLSA (113 aa)) enclose the BTB domain. Residues 73-84 (ETDKKGKGHEIE) are compositionally biased toward basic and acidic residues. Positions 73-98 (ETDKKGKGHEIEDDKEEEEVEEQEIE) are disordered. The span at 85-98 (DDKEEEEVEEQEIE) shows a compositional bias: acidic residues. One can recognise an NPH3 domain in the interval 254–530 (ELWFEDLTQL…VQVLFFEQLQ (277 aa)). Tyr-471 bears the Phosphotyrosine mark.

Belongs to the NPH3 family.

It functions in the pathway protein modification; protein ubiquitination. Its function is as follows. May act as a substrate-specific adapter of an E3 ubiquitin-protein ligase complex (CUL3-RBX1-BTB) which mediates the ubiquitination and subsequent proteasomal degradation of target proteins. This is BTB/POZ domain-containing protein At5g66560 from Arabidopsis thaliana (Mouse-ear cress).